A 90-amino-acid chain; its full sequence is Accessory gland-specific peptide 26Ab (90 aa).

The N-terminal stretch at 1 to 21 (MNYFAVLCIFSCICFWQFSDA) is a signal peptide.

In terms of tissue distribution, main cells of the accessory glands of males.

The protein resides in the secreted. It is found in the extracellular space. Its function is as follows. This protein is transferred from male to female during mating and may affect egglaying and behavior after mating. The protein is Accessory gland-specific peptide 26Ab (Acp26Ab) of Drosophila simulans (Fruit fly).